We begin with the raw amino-acid sequence, 447 residues long: Phosphoglucosamine mutase (447 aa).

Catalysis depends on serine 106, which acts as the Phosphoserine intermediate. Residues serine 106, aspartate 245, aspartate 247, and aspartate 249 each coordinate Mg(2+). Serine 106 carries the phosphoserine modification.

Belongs to the phosphohexose mutase family. Requires Mg(2+) as cofactor. In terms of processing, activated by phosphorylation.

It carries out the reaction alpha-D-glucosamine 1-phosphate = D-glucosamine 6-phosphate. In terms of biological role, catalyzes the conversion of glucosamine-6-phosphate to glucosamine-1-phosphate. In Cupriavidus pinatubonensis (strain JMP 134 / LMG 1197) (Cupriavidus necator (strain JMP 134)), this protein is Phosphoglucosamine mutase.